Consider the following 531-residue polypeptide: Tyrosine/DOPA decarboxylase 2 (531 aa).

Position 319 is an N6-(pyridoxal phosphate)lysine (Lys-319).

This sequence belongs to the group II decarboxylase family. In terms of assembly, homodimer. It depends on pyridoxal 5'-phosphate as a cofactor. As to expression, predominantly expressed in the roots and stems, while a lower level expression is seen in the sepals and carpels of fully expanded flowers.

It carries out the reaction L-tyrosine + H(+) = tyramine + CO2. It catalyses the reaction L-dopa + H(+) = dopamine + CO2. The catalysed reaction is 5-hydroxy-L-tryptophan + H(+) = serotonin + CO2. In terms of biological role, marginally higher substrate specificity for L-DOPA over L-tyrosine. This is Tyrosine/DOPA decarboxylase 2 (TYDC2) from Papaver somniferum (Opium poppy).